Consider the following 113-residue polypeptide: Endoribonuclease SymE (113 aa).

The SpoVT-AbrB domain occupies 29-74; sequence SRYPDYSRIPAITLKGQWLEAAGFATGTAIDVKVMEGCIVLTAQPP.

It belongs to the SymE family.

The protein resides in the cytoplasm. Functionally, involved in the degradation and recycling of damaged RNA. It is itself a target for degradation by the ATP-dependent protease Lon. This is Endoribonuclease SymE from Escherichia coli O1:K1 / APEC.